Reading from the N-terminus, the 797-residue chain is uncharacterized protein (797 aa).

This is an uncharacterized protein from Treponema pallidum (strain Nichols).